Reading from the N-terminus, the 311-residue chain is Glycosyltransferase 6 domain-containing protein 1 (311 aa).

Topologically, residues 1–5 are cytoplasmic; the sequence is MKAKG. Residues 6–26 form a helical; Signal-anchor for type II membrane protein membrane-spanning segment; it reads RILLLTSCLFLLLLLLAKIHL. The Lumenal segment spans residues 27 to 311; the sequence is RNHQEEELPL…KVAHYPTDDL (285 aa). N77 is a glycosylation site (N-linked (GlcNAc...) asparagine). Substrate-binding positions include 85–90, 176–178, and 198–201; these read FAVSSF, SVN, and HAWW. The Nucleophile role is filled by E266.

The protein belongs to the glycosyltransferase 6 family. Requires Mn(2+) as cofactor.

It is found in the membrane. This Rattus norvegicus (Rat) protein is Glycosyltransferase 6 domain-containing protein 1 (Glt6d1).